The sequence spans 43 residues: Protein PsbN (43 aa).

The helical transmembrane segment at 5–27 (ALVAISISRLLVSFTGYALYTAF) threads the bilayer.

This sequence belongs to the PsbN family.

Its subcellular location is the plastid. It is found in the chloroplast thylakoid membrane. May play a role in photosystem I and II biogenesis. This chain is Protein PsbN, found in Bowenia serrulata (Byfield fern).